The following is a 55-amino-acid chain: Sec-independent protein translocase protein TatA (55 aa).

A helical transmembrane segment spans residues 1–21; the sequence is MGMSFSHLLIVLLIIFVLFGA.

Belongs to the TatA/E family. As to quaternary structure, the Tat system comprises two distinct complexes: a TatABC complex, containing multiple copies of TatA, TatB and TatC subunits, and a separate TatA complex, containing only TatA subunits. Substrates initially bind to the TatABC complex, which probably triggers association of the separate TatA complex to form the active translocon.

The protein localises to the cell inner membrane. Part of the twin-arginine translocation (Tat) system that transports large folded proteins containing a characteristic twin-arginine motif in their signal peptide across membranes. TatA could form the protein-conducting channel of the Tat system. In Rickettsia peacockii (strain Rustic), this protein is Sec-independent protein translocase protein TatA.